Consider the following 332-residue polypeptide: Oxygen-dependent coproporphyrinogen-III oxidase (332 aa).

A coproporphyrinogen III-binding site is contributed by S119. The active-site Proton donor is H133. Coproporphyrinogen III is bound by residues 135 to 137 and 284 to 285; these read NVR and GR.

The protein belongs to the aerobic coproporphyrinogen-III oxidase family. As to quaternary structure, homodimer.

It catalyses the reaction coproporphyrinogen III + O2 + 2 H(+) = protoporphyrinogen IX + 2 CO2 + 2 H2O. It functions in the pathway porphyrin-containing compound metabolism; protoporphyrin-IX biosynthesis; protoporphyrinogen-IX from coproporphyrinogen-III (O2 route): step 1/1. Functionally, involved in the heme biosynthesis. Catalyzes the aerobic oxidative decarboxylation of propionate groups of rings A and B of coproporphyrinogen-III to yield the vinyl groups in protoporphyrinogen-IX. This is Oxygen-dependent coproporphyrinogen-III oxidase (cpox) from Dictyostelium discoideum (Social amoeba).